A 123-amino-acid polypeptide reads, in one-letter code: Large ribosomal subunit protein uL18 (123 aa).

The protein belongs to the universal ribosomal protein uL18 family. As to quaternary structure, part of the 50S ribosomal subunit; part of the 5S rRNA/L5/L18/L25 subcomplex. Contacts the 5S and 23S rRNAs.

This is one of the proteins that bind and probably mediate the attachment of the 5S RNA into the large ribosomal subunit, where it forms part of the central protuberance. This is Large ribosomal subunit protein uL18 from Wolbachia pipientis wMel.